A 141-amino-acid chain; its full sequence is Large ribosomal subunit protein uL11 (141 aa).

The protein belongs to the universal ribosomal protein uL11 family. In terms of assembly, part of the ribosomal stalk of the 50S ribosomal subunit. Interacts with L10 and the large rRNA to form the base of the stalk. L10 forms an elongated spine to which L12 dimers bind in a sequential fashion forming a multimeric L10(L12)X complex. One or more lysine residues are methylated.

Functionally, forms part of the ribosomal stalk which helps the ribosome interact with GTP-bound translation factors. The sequence is that of Large ribosomal subunit protein uL11 from Synechococcus sp. (strain CC9605).